We begin with the raw amino-acid sequence, 76 residues long: Exodeoxyribonuclease 7 small subunit (76 aa).

Belongs to the XseB family. Heterooligomer composed of large and small subunits.

It localises to the cytoplasm. It catalyses the reaction Exonucleolytic cleavage in either 5'- to 3'- or 3'- to 5'-direction to yield nucleoside 5'-phosphates.. Functionally, bidirectionally degrades single-stranded DNA into large acid-insoluble oligonucleotides, which are then degraded further into small acid-soluble oligonucleotides. The polypeptide is Exodeoxyribonuclease 7 small subunit (Bacillus cereus (strain ATCC 14579 / DSM 31 / CCUG 7414 / JCM 2152 / NBRC 15305 / NCIMB 9373 / NCTC 2599 / NRRL B-3711)).